Reading from the N-terminus, the 645-residue chain is Aminopeptidase P1 (645 aa).

An N-acetylserine modification is found at serine 2. Positions 69 and 420 each coordinate a peptide. Residues aspartate 440, aspartate 451, and histidine 514 each coordinate Mn(2+). Positions 514, 523, and 549 each coordinate a peptide. Mn(2+) contacts are provided by glutamate 549 and glutamate 563.

This sequence belongs to the peptidase M24B family. In terms of assembly, homodimer. Interacts with N-1-naphthylphthalamic acid (NPA). The cofactor is Mn(2+). Zn(2+) is required as a cofactor. In terms of processing, glycosylated. Also present in a non-glycosylated form. Ubiquitous with preferential expression in 5 days-old seedlings, roots, flowers, inflorescences and rosette leaves (at protein levels).

It localises to the cytoplasm. The protein localises to the cell membrane. It is found in the microsome membrane. It carries out the reaction Release of any N-terminal amino acid, including proline, that is linked to proline, even from a dipeptide or tripeptide.. Its activity is regulated as follows. Inhibited by EGTA and apstatin, and, to some extent, by the flavonoid kaempferol. Its function is as follows. Catalyzes the removal of a penultimate prolyl residue from the N-termini of peptides, such as Arg-Pro-Pro. Aminopeptidase that binds to the auxin transport inhibitor N-1-naphthylphthalamic acid (NPA). May play a negative role in the regulation of PIN auxin transport proteins. The protein is Aminopeptidase P1 of Arabidopsis thaliana (Mouse-ear cress).